The chain runs to 118 residues: Putative pterin-4-alpha-carbinolamine dehydratase (118 aa).

The protein belongs to the pterin-4-alpha-carbinolamine dehydratase family.

It carries out the reaction (4aS,6R)-4a-hydroxy-L-erythro-5,6,7,8-tetrahydrobiopterin = (6R)-L-erythro-6,7-dihydrobiopterin + H2O. This chain is Putative pterin-4-alpha-carbinolamine dehydratase, found in Azotobacter vinelandii (strain DJ / ATCC BAA-1303).